A 106-amino-acid polypeptide reads, in one-letter code: Protein U4 (106 aa).

Residues 5–25 (FFISIILFVVLLNPSLIINMV) traverse the membrane as a helical segment.

The protein belongs to the nanovirus U4 protein family.

It is found in the membrane. This Cicer arietinum (Chickpea) protein is Protein U4 (DNA-U4).